Reading from the N-terminus, the 1465-residue chain is MALEIDAKNAAATGDAGTIGKAKAKENKNHNNNNNAPAAGEKNLVNGSSAATKKKGKKNRNKSPPQNAVEAEASAALSNGHSENGDAADANANVLAEKGEGVAAGAVVGDGAEGGASAEGAVAEGDAAAAGEDVDLDALHDIGITVNISSPGTDVLSVQLSSMELVQEIHQLLMDREETCHRTCFSLQLDNVTLDNFAELKTIESLEQGSTIRVVEEPYTMREARIHVRHVRDLLKNLDPADAYNGIDCTSLTYLNTITQGDLLDKKRTRPDSVDCTPPDYVTPGVREPPLLPLHPNIKNAKGPQALKVLTTSAWNPPPGPRKLHGDLMYLYVVTMEDKRFHISACSKGFYINQSTDECFNPKPDNPSHLSHSLIDLLSHISPSFRRAFQAIQKRRTMRHAFERVATPYQVYQWAAPQLEHTVDAIRAEDAFSSKLGYEEHIPGQTRDWNEELQTTRELPRKTLPERLLRERAIFKVHGDFVTAATRGAMAVIDGNVLAINPGEDAKMQMFIWNNIFFSLGFDVRDHYKELGGDHAAFVAPRYDLHGVRVYNAVDIEGLYTLGTVVIDYRGYRVTAQSIIPGILEREQEQSVVYGSIDFGKTVLSHPKYLELLRQAGKHLKILPHSVLNERDEPVELCSSVECKGIIGNDGRHYILDLLRTFPPDVNFLKLQDVQLSKELTEMGFPIEHRHKLCCLRQELLEAFIEDRYVTFIRIAAVHLQQLNAKKQAATANAEKELPAIAEKQEEPNEEQPEKTEEQPAEKEESKPTPSETKSAEAMVNAIREAQSNVAVSNEVQAAEVVKRACAAVGSLKEKEFDFRFNPDVFSPGIRHVDGPDGGVQSLAKQKRLVQDAAEFLVLKQIPAFIKEHMAHSSPPIDGQSLTESLHSHGINVRYLGKVIKMLGQMPRMDYLHRIAILEIIVRATKHIYYTYMQSTEPLHLSAAISHFLNCLLTTGPVNPAVSSDELHKKQPRNNSGKHNKHKAAKASKPQAAAAQNGNATAAGSGGAGATTSGATSSNSDWTLVTPRSLWQQIRKEVKAYWNWELDCDSIESAGAKYGLLRISLLRAFCLKVGIQVLLREYNFESKHKPTFGDDDIVNVFPVVKHISPRATDAYNFYTTGQAKIQQGMLKEGYELISEALNLLNNVFGAMHQENDSCLRMLARLSYLLGDAQDALAIQQRAVIMSERVNGIDHPSTILEYTHLSLYSFANGHVGMSLKLLYRARYLLVLICGEDHPEVALIDSNISLILHALGEYELSLRFIEHALKLNLKYFGNKAMHVAVSYHLMARIQSCMGDFRSALNNEKETYSIYKSQLGEKHEKTRESAECLRLLTHEAVALQRKMNDIYSNGKLTSDLPPIHITPPSMGSVLEMLNTINGILFVHISQKDIVKVRSEIEKHLKTNTDENDVPDESEITSALKTIVAAVNNNDNASETEQPKDEASAAGTPTQLTNGSEESTATVSS.

Residues 1 to 87 form a disordered region; the sequence is MALEIDAKNA…SNGHSENGDA (87 aa). The span at 30–51 shows a compositional bias: low complexity; it reads HNNNNNAPAAGEKNLVNGSSAA. A compositionally biased stretch (basic residues) spans 52 to 61; sequence TKKKGKKNRN. The residue at position 273 (serine 273) is a Phosphoserine. One can recognise a Clu domain in the interval 427–669; the sequence is RAEDAFSSKL…RTFPPDVNFL (243 aa). Positions 742 to 767 are enriched in basic and acidic residues; it reads AEKQEEPNEEQPEKTEEQPAEKEESK. 2 disordered regions span residues 742 to 776 and 962 to 1021; these read AEKQ…TKSA and VSSD…SNSD. A compositionally biased stretch (basic residues) spans 970–986; it reads KQPRNNSGKHNKHKAAK. Low complexity-rich tracts occupy residues 987-1003 and 1010-1020; these read ASKP…ATAA and ATTSGATSSNS. 3 TPR repeats span residues 1114–1147, 1240–1273, and 1275–1308; these read AYNF…LNNV, ALID…NLKY, and GNKA…EKET. The segment at 1428 to 1465 is disordered; that stretch reads NNNDNASETEQPKDEASAAGTPTQLTNGSEESTATVSS. The span at 1447-1465 shows a compositional bias: polar residues; it reads GTPTQLTNGSEESTATVSS.

The protein belongs to the CLU family.

The protein localises to the cytoplasm. In terms of biological role, mRNA-binding protein involved in proper cytoplasmic distribution of mitochondria. The protein is Protein clueless of Drosophila virilis (Fruit fly).